The sequence spans 231 residues: MILIEHILGNVKKDPVWREKLKDATFDLLILDQREAQKSRCRKSSTQGLDLGISLDRNVVLADGDVLAWDEETNVAVVVQINLRDVMVIDLSELKSRSPDELIKTCFELGHALGNQHWKAVTKHNEVYVPLTVATTMMDSVMRTHGFQHLPFRFVKGAEILPLLTNSEARLLFGGAEDTDTHVHVASPLDEPHGSGLHIHGIHSHGEGHSHGDHDHDHSHSHGDHDHDHKH.

The tract at residues 185–231 (VASPLDEPHGSGLHIHGIHSHGEGHSHGDHDHDHSHSHGDHDHDHKH) is disordered. Over residues 204 to 231 (SHGEGHSHGDHDHDHSHSHGDHDHDHKH) the composition is skewed to basic and acidic residues.

This sequence belongs to the UreE family.

The protein resides in the cytoplasm. In terms of biological role, involved in urease metallocenter assembly. Binds nickel. Probably functions as a nickel donor during metallocenter assembly. The polypeptide is Urease accessory protein UreE (Yersinia pseudotuberculosis serotype O:1b (strain IP 31758)).